Reading from the N-terminus, the 367-residue chain is WAT1-related protein At3g28050 (367 aa).

10 helical membrane passes run Val-10 to Phe-30, Phe-40 to Phe-60, Phe-73 to Gly-93, Thr-103 to Phe-123, Thr-142 to Ala-162, Trp-179 to Val-199, Phe-211 to Phe-231, Ile-246 to His-266, Leu-276 to Phe-296, and Leu-301 to Trp-321. 2 EamA domains span residues Gly-25–Thr-153 and Leu-195–Val-319. The tract at residues His-338–Val-367 is disordered.

This sequence belongs to the drug/metabolite transporter (DMT) superfamily. Plant drug/metabolite exporter (P-DME) (TC 2.A.7.4) family.

It is found in the membrane. This is WAT1-related protein At3g28050 from Arabidopsis thaliana (Mouse-ear cress).